The chain runs to 513 residues: ATP synthase subunit alpha (513 aa).

Position 169 to 176 (169 to 176 (GDRQTGKT)) interacts with ATP.

This sequence belongs to the ATPase alpha/beta chains family. As to quaternary structure, F-type ATPases have 2 components, CF(1) - the catalytic core - and CF(0) - the membrane proton channel. CF(1) has five subunits: alpha(3), beta(3), gamma(1), delta(1), epsilon(1). CF(0) has three main subunits: a(1), b(2) and c(9-12). The alpha and beta chains form an alternating ring which encloses part of the gamma chain. CF(1) is attached to CF(0) by a central stalk formed by the gamma and epsilon chains, while a peripheral stalk is formed by the delta and b chains.

It is found in the cell inner membrane. The enzyme catalyses ATP + H2O + 4 H(+)(in) = ADP + phosphate + 5 H(+)(out). Its function is as follows. Produces ATP from ADP in the presence of a proton gradient across the membrane. The alpha chain is a regulatory subunit. This chain is ATP synthase subunit alpha, found in Ruegeria sp. (strain TM1040) (Silicibacter sp.).